The following is a 609-amino-acid chain: Heat shock factor protein (609 aa).

A compositionally biased stretch (polar residues) spans 1–33 (MIQTASTISSNGGTNQGMESSSANSPEMNGTQN). The interval 1–47 (MIQTASTISSNGGTNQGMESSSANSPEMNGTQNSMSVGMSGSGSSQN) is disordered. Over residues 34–45 (SMSVGMSGSGSS) the composition is skewed to low complexity. Residues 50–156 (ITQFSNKLYN…LLCLVTRKKA (107 aa)) mediate DNA binding. Disordered stretches follow at residues 255-298 (PTVS…GKYR), 310-371 (SSFN…TDPK), 411-445 (NNTS…QPVQ), and 567-609 (SNGN…SIGA). 4 stretches are compositionally biased toward polar residues: residues 257–277 (VSPT…TTAN), 339–360 (DSFN…TDVP), 422–443 (YRGS…NLQP), and 567–597 (SNGN…SSPR). Residue Ser-350 is modified to Phosphoserine. Over residues 598–609 (QVRKKRKSSIGA) the composition is skewed to basic residues.

It belongs to the HSF family. Homotrimer.

Its subcellular location is the nucleus. Functionally, DNA-binding protein that specifically binds heat shock promoter elements (HSE) and activates transcription. Also required for growth at normal temperatures. This chain is Heat shock factor protein (hsf1), found in Schizosaccharomyces pombe (strain 972 / ATCC 24843) (Fission yeast).